Here is a 280-residue protein sequence, read N- to C-terminus: 4-deoxy-L-threo-5-hexosulose-uronate ketol-isomerase 1 (280 aa).

Histidine 198, histidine 200, glutamate 205, and histidine 247 together coordinate Zn(2+).

This sequence belongs to the KduI family. The cofactor is Zn(2+).

The enzyme catalyses 5-dehydro-4-deoxy-D-glucuronate = 3-deoxy-D-glycero-2,5-hexodiulosonate. It participates in glycan metabolism; pectin degradation; 2-dehydro-3-deoxy-D-gluconate from pectin: step 4/5. In terms of biological role, catalyzes the isomerization of 5-dehydro-4-deoxy-D-glucuronate to 3-deoxy-D-glycero-2,5-hexodiulosonate. The protein is 4-deoxy-L-threo-5-hexosulose-uronate ketol-isomerase 1 (kduI1) of Bacteroides thetaiotaomicron (strain ATCC 29148 / DSM 2079 / JCM 5827 / CCUG 10774 / NCTC 10582 / VPI-5482 / E50).